The chain runs to 428 residues: Adenylosuccinate synthetase (428 aa).

GTP is bound by residues 12–18 (GDEGKGK) and 40–42 (GHT). The Proton acceptor role is filled by D13. Mg(2+) is bound by residues D13 and G40. IMP contacts are provided by residues 13-16 (DEGK), 38-41 (NAGH), T130, R144, Q225, T240, and R304. The active-site Proton donor is H41. 300 to 306 (VTTGRAR) lines the substrate pocket. GTP is bound by residues R306, 332–334 (KID), and 414–416 (SVG).

The protein belongs to the adenylosuccinate synthetase family. As to quaternary structure, homodimer. The cofactor is Mg(2+).

The protein localises to the cytoplasm. It catalyses the reaction IMP + L-aspartate + GTP = N(6)-(1,2-dicarboxyethyl)-AMP + GDP + phosphate + 2 H(+). Its pathway is purine metabolism; AMP biosynthesis via de novo pathway; AMP from IMP: step 1/2. Plays an important role in the de novo pathway of purine nucleotide biosynthesis. Catalyzes the first committed step in the biosynthesis of AMP from IMP. The protein is Adenylosuccinate synthetase of Clostridium botulinum (strain Loch Maree / Type A3).